Consider the following 173-residue polypeptide: Crossover junction endodeoxyribonuclease RuvC (173 aa).

Catalysis depends on residues Asp8, Glu67, and Asp139. Mg(2+)-binding residues include Asp8, Glu67, and Asp139.

The protein belongs to the RuvC family. Homodimer which binds Holliday junction (HJ) DNA. The HJ becomes 2-fold symmetrical on binding to RuvC with unstacked arms; it has a different conformation from HJ DNA in complex with RuvA. In the full resolvosome a probable DNA-RuvA(4)-RuvB(12)-RuvC(2) complex forms which resolves the HJ. The cofactor is Mg(2+).

The protein localises to the cytoplasm. The catalysed reaction is Endonucleolytic cleavage at a junction such as a reciprocal single-stranded crossover between two homologous DNA duplexes (Holliday junction).. The RuvA-RuvB-RuvC complex processes Holliday junction (HJ) DNA during genetic recombination and DNA repair. Endonuclease that resolves HJ intermediates. Cleaves cruciform DNA by making single-stranded nicks across the HJ at symmetrical positions within the homologous arms, yielding a 5'-phosphate and a 3'-hydroxyl group; requires a central core of homology in the junction. The consensus cleavage sequence is 5'-(A/T)TT(C/G)-3'. Cleavage occurs on the 3'-side of the TT dinucleotide at the point of strand exchange. HJ branch migration catalyzed by RuvA-RuvB allows RuvC to scan DNA until it finds its consensus sequence, where it cleaves and resolves the cruciform DNA. The chain is Crossover junction endodeoxyribonuclease RuvC from Salmonella choleraesuis (strain SC-B67).